The chain runs to 441 residues: DNA-binding protein (441 aa).

A compositionally biased stretch (basic residues) spans 1–18; sequence MERTPKRAHGFRSTKPVK. A disordered region spans residues 1-85; the sequence is MERTPKRAHG…EESPEAPLSD (85 aa). Composition is skewed to acidic residues over residues 24 to 33 and 67 to 79; these read MMEEEEEEVE and VDDEENASDEESP. C191 and H193 together coordinate Zn(2+). A flexible loop region spans residues 204–236; it reads VELNPSSEAGKRALAEQNGVIEKNRFGRQVVVL. Positions 244, 262, 305, 307, 359, and 380 each coordinate Zn(2+). Residues 426 to 441 form a C-terminal arm, DBP binding region; sequence EVLAPVSPIASDDPFA.

This sequence belongs to the adenoviridae E2A DNA-binding protein family. As to quaternary structure, homomultimerizes on viral ssDNA bound to pTP. Forms a initiation complex with viral polymerase, pTP and hosts NFIA and POU2F1/OCT1. Interacts with host SRCAP.

It is found in the host nucleus. Its function is as follows. Plays a role in the elongation phase of viral strand displacement replication by unwinding the template in an ATP-independent fashion, employing its capacity to form multimers. Also enhances the rate of initiation. Released from template upon second strand synthesis. Assembles in complex with viral pTP, viral pol, host NFIA and host POU2F1/OCT1 on viral origin of replication. Covers the whole ssDNA genome during synthesis. The complementary strand synthesis induces its relese from DNA template. May inhibit cellular transcription mediated by the interaction between host SRCAP and CBP. The protein is DNA-binding protein of Fowl adenovirus A serotype 1 (strain CELO / Phelps) (FAdV-1).